The following is a 571-amino-acid chain: MRPAPPPPLLLLLLLLPPPSLSHDGTIIAATSPTSGQPSTELPGGKGLITTAKTIQNTDLAITGEKVMSATVSKGPLPGSSNSVSMTLAPTQKNTVIAPDQDEKVSTNPTIATSDSKGIPDLNKSILPSATNSMKPDTPVTQTAGPGAQGNPGTTVSHMTSENTEQTTSQPPPQVKPSSITPALTSIITPTSPRQPSANSTTLKPPESSSESPDKSHTASSSLGTKVVPSSSLYGTSPTRTSSVTFWGGPQSSSGTPPVPAPTPRPAATSSSTPGISSVPGTTSLPSETESLESPSSESPSQPPKLRPTGPPSSGSSGPAASLPDEGPRSSSTQRAATAPRAPSVPSPTSAQGDDRIKCESPGRLTDKMLLLNLTRSGLCAGNNSDDKLITLLCRAAKATFNPAQDQCHIRLVPIQDTQAVAIKEITVQTNLLPRDVYELLKDKWDELKEVGVSNMKLGDQGPPEETEDRFSMPLIITIVCMASFLLLVAALYGCCHQRLSQRKDQQRLTEELQTVENGYHDNPTLEVMETSSEMQEKKVVNLNGELGDSWIVPLDNLAKDDLDEEEDTHL.

Positions 1 to 22 (MRPAPPPPLLLLLLLLPPPSLS) are cleaved as a signal peptide. Residues 23-474 (HDGTIIAATS…EETEDRFSMP (452 aa)) are Extracellular-facing. A disordered region spans residues 94–361 (NTVIAPDQDE…QGDDRIKCES (268 aa)). Residues 106 to 116 (STNPTIATSDS) show a composition bias toward polar residues. A glycan (N-linked (GlcNAc...) asparagine) is linked at N123. Composition is skewed to polar residues over residues 126 to 144 (ILPSATNSMKPDTPVTQTA), 151 to 169 (NPGTTVSHMTSENTEQTTS), 176 to 203 (KPSSITPALTSIITPTSPRQPSANSTTL), and 218 to 245 (TASSSLGTKVVPSSSLYGTSPTRTSSVT). An N-linked (GlcNAc...) asparagine glycan is attached at N199. A compositionally biased stretch (low complexity) spans 282 to 300 (TTSLPSETESLESPSSESP). Over residues 301–311 (SQPPKLRPTGP) the composition is skewed to pro residues. Residues 312-322 (PSSGSSGPAAS) show a composition bias toward low complexity. Residues N373 and N383 are each glycosylated (N-linked (GlcNAc...) asparagine). A helical membrane pass occupies residues 475–495 (LIITIVCMASFLLLVAALYGC). Topologically, residues 496 to 571 (CHQRLSQRKD…DLDEEEDTHL (76 aa)) are cytoplasmic. T531 is modified (phosphothreonine). A Phosphoserine modification is found at S550. The residue at position 569 (T569) is a Phosphothreonine.

Belongs to the podocalyxin family. In terms of assembly, found in a complex with EZR, PODXL and NHERF2. Associates with the actin cytoskeleton through complex formation with EZR and NHERF2. Interacts (via the C-terminal PDZ-binding motif DTHL) with NHERF1 (via the PDZ domains); interaction is not detected in glomerular epithelium cells. Interacts (via the C-terminal PDZ-binding motif DTHL) with NHERF2 (via the PDZ 1 domain); interaction is detected in glomerular epithelium cells. Interacts with EZR. Monomer; when associated with the membrane raft. Oligomer; when integrated in the apical membrane. Interacts with NHERF2. Interacts (via the C-terminal PDZ-binding motif DTHL) with NHERF1 (via the PDZ domains); the interaction take place early in the secretory pathway and is necessary for its apical membrane sorting. N- and O-linked glycosylated. Sialoglycoprotein. In terms of tissue distribution, expressed in glomerular and tubular epithelial cells and peritubular capillaries of the kidney (at protein level). Expressed in heart, lung, renal cortex and medulla, kidney and muscle.

The protein resides in the apical cell membrane. It localises to the membrane raft. Its subcellular location is the cell projection. It is found in the lamellipodium. The protein localises to the filopodium. The protein resides in the ruffle. It localises to the microvillus. Its subcellular location is the membrane. Functionally, involved in the regulation of both adhesion and cell morphology and cancer progression. Functions as an anti-adhesive molecule that maintains an open filtration pathway between neighboring foot processes in the podocyte by charge repulsion. Acts as a pro-adhesive molecule, enhancing the adherence of cells to immobilized ligands, increasing the rate of migration and cell-cell contacts in an integrin-dependent manner. Induces the formation of apical actin-dependent microvilli. Involved in the formation of a preapical plasma membrane subdomain to set up initial epithelial polarization and the apical lumen formation during renal tubulogenesis. Plays a role in cancer development and aggressiveness by inducing cell migration and invasion through its interaction with the actin-binding protein EZR. Affects EZR-dependent signaling events, leading to increased activities of the MAPK and PI3K pathways in cancer cells. This chain is Podocalyxin (PODXL), found in Canis lupus familiaris (Dog).